The sequence spans 85 residues: MGNNPSALKRARQNLKRNLRNVSVKSELKTIEKRCMSLIREGKKEEALEFFKFVSKKLDTAARKRIIHRNKAARKKSNLSILLLR.

The protein belongs to the bacterial ribosomal protein bS20 family.

In terms of biological role, binds directly to 16S ribosomal RNA. The sequence is that of Small ribosomal subunit protein bS20 from Borrelia hermsii (strain HS1 / DAH).